We begin with the raw amino-acid sequence, 142 residues long: Baculoviral IAP repeat-containing protein 5 (142 aa).

The stretch at 18-88 is one BIR repeat; it reads RVSTFKNWPF…KHSSGCAFLS (71 aa). Phosphoserine; by AURKC is present on serine 20. Position 23 is an N6-acetyllysine (lysine 23). Position 34 is a phosphothreonine; by CDK1 and CDK15 (threonine 34). Threonine 48 bears the Phosphothreonine mark. Cysteine 57, cysteine 60, histidine 77, and cysteine 84 together coordinate Zn(2+). An N6-acetyllysine mark is found at lysine 90, lysine 110, lysine 112, and lysine 115. Phosphothreonine; by AURKB is present on threonine 117. Residue lysine 129 is modified to N6-acetyllysine.

The protein belongs to the IAP family. As to quaternary structure, monomer or homodimer. Exists as a homodimer in the apo state and as a monomer in the CPC-bound state. The monomer protects cells against apoptosis more efficiently than the dimer. Only the dimeric form is capable of enhancing tubulin stability in cells. When phosphorylated, interacts with LAMTOR5/HBXIP; the resulting complex binds pro-CASP9, as well as active CASP9, but much less efficiently. Component of the chromosomal passenger complex (CPC) composed of at least BIRC5/survivin, CDCA8/borealin, INCENP, AURKB or AURKC; in the complex forms a triple-helix bundle-based subcomplex with INCENP and CDCA8. Interacts with JTB. Interacts (via BIR domain) with histone H3 phosphorylated at 'Thr-3' (H3pT3). Interacts with EVI5. Interacts with GTP-bound RAN in both the S and M phases of the cell cycle. Interacts with USP9X. Interacts with tubulin. Interacts with BIRC2/c-IAP1. The acetylated form at Lys-129 interacts with STAT3. The monomeric form deacetylated at Lys-129 interacts with XPO1/CRM1. The monomeric form interacts with XIAP/BIRC4. Both the dimeric and monomeric form can interact with DIABLO/SMAC. Interacts with BIRC6/bruce. Interacts with FBXL7; this interaction facilitates the polyubiquitination and subsequent proteasomal degradation of BIRC5 by the SCF(FBXL7) E3 ubiquitin-protein ligase complex. Post-translationally, ubiquitinated by the Cul9-RING ubiquitin-protein ligase complex, leading to its degradation. Ubiquitination is required for centrosomal targeting. Deubiquitinated by USP35 or USP38; leading to stabilization. Acetylation at Lys-129 results in its homodimerization, while deacetylation promotes the formation of monomers which heterodimerize with XPO1/CRM1 which facilitates its nuclear export. The acetylated form represses STAT3 transactivation. The dynamic equilibrium between its acetylation and deacetylation at Lys-129 determines its interaction with XPO1/CRM1, its subsequent subcellular localization, and its ability to inhibit STAT3 transactivation. In terms of processing, in vitro phosphorylation at Thr-117 by AURKB prevents interaction with INCENP and localization to mitotic chromosomes. Phosphorylation at Thr-48 by CK2 is critical for its mitotic and anti-apoptotic activities. Phosphorylation at Thr-34 by CDK15 is critical for its anti-apoptotic activity. Phosphorylation at Ser-20 by AURKC is critical for regulation of proper chromosome alignment and segregation, and possibly cytokinesis.

The protein localises to the cytoplasm. It localises to the nucleus. The protein resides in the chromosome. It is found in the centromere. Its subcellular location is the cytoskeleton. The protein localises to the spindle. It localises to the kinetochore. The protein resides in the midbody. Its function is as follows. Multitasking protein that has dual roles in promoting cell proliferation and preventing apoptosis. Component of a chromosome passage protein complex (CPC) which is essential for chromosome alignment and segregation during mitosis and cytokinesis. Acts as an important regulator of the localization of this complex; directs CPC movement to different locations from the inner centromere during prometaphase to midbody during cytokinesis and participates in the organization of the center spindle by associating with polymerized microtubules. Involved in the recruitment of CPC to centromeres during early mitosis via association with histone H3 phosphorylated at 'Thr-3' (H3pT3) during mitosis. The complex with RAN plays a role in mitotic spindle formation by serving as a physical scaffold to help deliver the RAN effector molecule TPX2 to microtubules. May counteract a default induction of apoptosis in G2/M phase. The acetylated form represses STAT3 transactivation of target gene promoters. May play a role in neoplasia. Inhibitor of CASP3 and CASP7. Essential for the maintenance of mitochondrial integrity and function. This chain is Baculoviral IAP repeat-containing protein 5 (BIRC5), found in Bos taurus (Bovine).